We begin with the raw amino-acid sequence, 796 residues long: Probable phosphoketolase (796 aa).

The protein belongs to the XFP family. Requires thiamine diphosphate as cofactor.

The sequence is that of Probable phosphoketolase from Synechococcus elongatus (strain ATCC 33912 / PCC 7942 / FACHB-805) (Anacystis nidulans R2).